The chain runs to 388 residues: Probable aspartic-type endopeptidase MCYG_06955 (388 aa).

The N-terminal stretch at 1–21 (MMGPFFYFTAYVSLLFAFTQA) is a signal peptide. N-linked (GlcNAc...) asparagine glycosylation is found at N82 and N104. A Peptidase A1 domain is found at 96–384 (FVNEITVGND…DYDGPKIGFA (289 aa)). Residue D112 is part of the active site. N209 and N261 each carry an N-linked (GlcNAc...) asparagine glycan. D278 is an active-site residue. 2 N-linked (GlcNAc...) asparagine glycosylation sites follow: N315 and N320.

This sequence belongs to the peptidase A1 family.

It localises to the secreted. Functionally, probable aspartic-type endopeptidase which contributes to virulence. The protein is Probable aspartic-type endopeptidase MCYG_06955 of Arthroderma otae (strain ATCC MYA-4605 / CBS 113480) (Microsporum canis).